Consider the following 413-residue polypeptide: Multifunctional CCA protein (413 aa).

Residues G8 and R11 each coordinate ATP. G8 and R11 together coordinate CTP. Mg(2+) contacts are provided by D21 and D23. ATP is bound by residues R91, R137, and R140. CTP contacts are provided by R91, R137, and R140. In terms of domain architecture, HD spans 228–329; the sequence is TGIHTLMTLS…VKLFDNIDAW (102 aa).

It belongs to the tRNA nucleotidyltransferase/poly(A) polymerase family. Bacterial CCA-adding enzyme type 1 subfamily. Monomer. Can also form homodimers and oligomers. Mg(2+) is required as a cofactor. It depends on Ni(2+) as a cofactor.

The catalysed reaction is a tRNA precursor + 2 CTP + ATP = a tRNA with a 3' CCA end + 3 diphosphate. It carries out the reaction a tRNA with a 3' CCA end + 2 CTP + ATP = a tRNA with a 3' CCACCA end + 3 diphosphate. Catalyzes the addition and repair of the essential 3'-terminal CCA sequence in tRNAs without using a nucleic acid template. Adds these three nucleotides in the order of C, C, and A to the tRNA nucleotide-73, using CTP and ATP as substrates and producing inorganic pyrophosphate. tRNA 3'-terminal CCA addition is required both for tRNA processing and repair. Also involved in tRNA surveillance by mediating tandem CCA addition to generate a CCACCA at the 3' terminus of unstable tRNAs. While stable tRNAs receive only 3'-terminal CCA, unstable tRNAs are marked with CCACCA and rapidly degraded. This chain is Multifunctional CCA protein, found in Enterobacter sp. (strain 638).